A 531-amino-acid polypeptide reads, in one-letter code: Outer dynein arm-docking complex subunit 4 (531 aa).

TPR repeat units follow at residues 15–48, 50–82, and 83–116; these read FSTY…QPEE, NCLV…ENDF, and FKGL…RPEF. The tract at residues 161–185 is disordered; it reads KQKAQVKVQKKDSKQQKKVDPERSQ. Positions 169–185 are enriched in basic and acidic residues; the sequence is QKKDSKQQKKVDPERSQ. 5 TPR repeats span residues 275 to 307, 320 to 353, 360 to 393, 397 to 430, and 437 to 470; these read VKSL…VERW, GSLH…AEKY, SRAL…ANSS, TWLY…ADAA, and LNAC…ARLL. The interval 487–531 is disordered; that stretch reads KQGMEEQQESEQNNDENDNLRADGNTARDEEEEDVHVQRTEEDEG. The span at 492–503 shows a compositional bias: acidic residues; it reads EQQESEQNNDEN. Over residues 521 to 531 the composition is skewed to basic and acidic residues; the sequence is VHVQRTEEDEG.

As to quaternary structure, component of the outer dynein arm-docking complex. In terms of tissue distribution, in the mucociliary epithelium, specifically expressed in ciliated cells.

The protein resides in the cytoplasm. The protein localises to the cytoskeleton. It is found in the cilium axoneme. Its function is as follows. Component of the outer dynein arm-docking complex (ODA-DC) that mediates outer dynein arms (ODA) binding onto the doublet microtubule. Plays an essential role for the assembly of ODA-DC and in the docking of ODA in ciliary axoneme. Functionally, required for the docking of the outer dynein arm to cilia, hence plays an essential role in cilia motility. The sequence is that of Outer dynein arm-docking complex subunit 4 (odad4) from Xenopus laevis (African clawed frog).